The chain runs to 108 residues: MNSNQHILDELYQVILSRKGASPDSSYTASLLHKGVDKILKKVGEEATEVVIAGKGGTDTELIYETADLLYHGLVLLAARDIPADAVWSELQRRFGTSGIVEKAARKE.

It belongs to the PRA-PH family.

It localises to the cytoplasm. It catalyses the reaction 1-(5-phospho-beta-D-ribosyl)-ATP + H2O = 1-(5-phospho-beta-D-ribosyl)-5'-AMP + diphosphate + H(+). It functions in the pathway amino-acid biosynthesis; L-histidine biosynthesis; L-histidine from 5-phospho-alpha-D-ribose 1-diphosphate: step 2/9. This is Phosphoribosyl-ATP pyrophosphatase from Trichlorobacter lovleyi (strain ATCC BAA-1151 / DSM 17278 / SZ) (Geobacter lovleyi).